The following is a 524-amino-acid chain: Bifunctional purine biosynthesis protein PurH (524 aa).

In terms of domain architecture, MGS-like spans 1 to 149; the sequence is MSDPVIKRAL…KNNESVTVVT (149 aa).

This sequence belongs to the PurH family.

It catalyses the reaction (6R)-10-formyltetrahydrofolate + 5-amino-1-(5-phospho-beta-D-ribosyl)imidazole-4-carboxamide = 5-formamido-1-(5-phospho-D-ribosyl)imidazole-4-carboxamide + (6S)-5,6,7,8-tetrahydrofolate. The catalysed reaction is IMP + H2O = 5-formamido-1-(5-phospho-D-ribosyl)imidazole-4-carboxamide. The protein operates within purine metabolism; IMP biosynthesis via de novo pathway; 5-formamido-1-(5-phospho-D-ribosyl)imidazole-4-carboxamide from 5-amino-1-(5-phospho-D-ribosyl)imidazole-4-carboxamide (10-formyl THF route): step 1/1. It participates in purine metabolism; IMP biosynthesis via de novo pathway; IMP from 5-formamido-1-(5-phospho-D-ribosyl)imidazole-4-carboxamide: step 1/1. The chain is Bifunctional purine biosynthesis protein PurH from Chlorobium chlorochromatii (strain CaD3).